The primary structure comprises 153 residues: Aspartate carbamoyltransferase regulatory chain (153 aa).

C109, C114, C138, and C141 together coordinate Zn(2+).

It belongs to the PyrI family. As to quaternary structure, contains catalytic and regulatory chains. The cofactor is Zn(2+).

Involved in allosteric regulation of aspartate carbamoyltransferase. The polypeptide is Aspartate carbamoyltransferase regulatory chain (Salmonella newport (strain SL254)).